Consider the following 395-residue polypeptide: Tryptophan synthase beta chain (395 aa).

Lys86 carries the N6-(pyridoxal phosphate)lysine modification.

Belongs to the TrpB family. Tetramer of two alpha and two beta chains. It depends on pyridoxal 5'-phosphate as a cofactor.

It catalyses the reaction (1S,2R)-1-C-(indol-3-yl)glycerol 3-phosphate + L-serine = D-glyceraldehyde 3-phosphate + L-tryptophan + H2O. It functions in the pathway amino-acid biosynthesis; L-tryptophan biosynthesis; L-tryptophan from chorismate: step 5/5. Functionally, the beta subunit is responsible for the synthesis of L-tryptophan from indole and L-serine. The sequence is that of Tryptophan synthase beta chain from Pseudoalteromonas atlantica (strain T6c / ATCC BAA-1087).